The primary structure comprises 900 residues: Endoglucanase H (900 aa).

Residues 1–44 form the signal peptide; sequence MKKRLLVSFLVLSIIVGLLSFQSLGNYNSGLKIGAWVGTQPSES. The 254-residue stretch at 45–298 folds into the GH26 domain; it reads AIKSFQELQG…NSSPEALAAY (254 aa). The active-site Proton donor is Glu-131. Residue Glu-244 is the Nucleophile of the active site. The tract at residues 300–630 is catalytic; it reads EAIGAGSSNP…DTEILNALFN (331 aa). Positions 303-326 are disordered; that stretch reads GAGSSNPTPTPTWTSTPPSSSPKA. Low complexity predominate over residues 306–324; the sequence is SSNPTPTPTWTSTPPSSSP. The active-site Proton donor is the Glu-460. Glu-565 (nucleophile) is an active-site residue. One can recognise a CBM11 domain in the interval 655–900; the sequence is AVGEKMLDDF…LLKAISEIPI (246 aa). The region spanning 827–900 is the Dockerin domain; that stretch reads PSIKHGDLNF…LLKAISEIPI (74 aa).

It in the N-terminal section; belongs to the glycosyl hydrolase 5 (cellulase A) family. In the C-terminal section; belongs to the glycosyl hydrolase 26 family.

The enzyme catalyses Endohydrolysis of (1-&gt;4)-beta-D-glucosidic linkages in cellulose, lichenin and cereal beta-D-glucans.. In terms of biological role, this enzyme catalyzes the endohydrolysis of 1,4-beta-glucosidic linkages in cellulose, lichenin and cereal beta-D-glucans. The chain is Endoglucanase H (celH) from Acetivibrio thermocellus (strain ATCC 27405 / DSM 1237 / JCM 9322 / NBRC 103400 / NCIMB 10682 / NRRL B-4536 / VPI 7372) (Clostridium thermocellum).